A 272-amino-acid chain; its full sequence is Aquaporin-11 (272 aa).

The Cytoplasmic portion of the chain corresponds to 1–14 (MTALRALWSEMQDT). Residues 15 to 35 (CTSLGLMLSVVLLAGLARVVA) form a helical membrane-spanning segment. Topologically, residues 36 to 47 (RQQQLHRPMAHA) are lumenal. Residues 48–68 (FVLEFLATLQLCCCTHELLLL) form a helical membrane-spanning segment. The Cytoplasmic segment spans residues 69–75 (SEQEPAH). A helical transmembrane segment spans residues 76–96 (PTWPLTLIYFFTLVHGLTLVG). The Lumenal portion of the chain corresponds to 97–167 (TSSNPCGVMM…NPIQVDLPKA (71 aa)). An NPC motif is present at residues 100-102 (NPC). The chain crosses the membrane as a helical span at residues 168 to 188 (VIVEALCSFIFHSALLNFQEV). At 189–195 (RPKLRIH) the chain is on the cytoplasmic side. Residues 196–216 (LLAALITFLVYAGGSLTGAVF) traverse the membrane as a helical segment. An NPA motif is present at residues 217–219 (NPA). Topologically, residues 217 to 235 (NPALALSLHFKCFDEAFLQ) are lumenal. The chain crosses the membrane as a helical span at residues 236–256 (FFIVYWLAPSLGILLMILMFS). The Cytoplasmic segment spans residues 257–272 (FFLPWLYNNHTINKKE).

This sequence belongs to the MIP/aquaporin (TC 1.A.8) family. AQP11/AQP12 subfamily. In terms of assembly, homodimer; disulfide-linked. Homotetramer. Can also form homomultimer. In terms of processing, not glycosylated. In terms of tissue distribution, expressed in retina specifically at retinal Mueller glial cells.

Its subcellular location is the endoplasmic reticulum membrane. The protein resides in the cytoplasmic vesicle membrane. It is found in the cell membrane. It catalyses the reaction H2O(in) = H2O(out). It carries out the reaction glycerol(in) = glycerol(out). The enzyme catalyses H2O2(out) = H2O2(in). Channel protein that facilitates the transport of water, glycerol and hydrogen peroxide across membrane of cell or organelles guaranteeing intracellular homeostasis in several organes like liver, kidney and brain. In situation of stress, participates in endoplasmic reticulum (ER) homeostasis by regulating redox homeostasis through the transport of hydrogen peroxide across the endoplasmic reticulum membrane thereby regulating the oxidative stress through the NADPH oxidase 2 pathway. Plays a role by maintaining an environment suitable for translation or protein foldings in the ER lumen namely by participating in the PKD1 glycosylation processing resulting in regulation of PKD1 membrane trafficking thereby preventing the accumulation of unfolding protein in ER. Plays a role in the proximal tubule function by regulating its endosomal acidification. May play a role in postnatal kidney development. In Equus caballus (Horse), this protein is Aquaporin-11.